Here is a 280-residue protein sequence, read N- to C-terminus: Nocamycin O-methyltransferase (280 aa).

The protein belongs to the methyltransferase superfamily.

The enzyme catalyses nocamycin E + S-adenosyl-L-methionine = nocamycin I + S-adenosyl-L-homocysteine. It functions in the pathway antibiotic biosynthesis. In terms of biological role, involved in the biosynthesis of nocamycin I and nocamycin II. Catalyzes the methylation of nocamycin E to yield nocamycin I. This Saccharothrix syringae (Nocardiopsis syringae) protein is Nocamycin O-methyltransferase.